The sequence spans 72 residues: Conotoxin LvVIA (72 aa).

The N-terminal stretch at 1-17 is a signal peptide; it reads VLIIAVLFLTASELVTA. The propeptide occupies 18-41; it reads DYTRDKWQYRAASLRDAMRNFRDT. Disulfide bonds link cysteine 44–cysteine 58, cysteine 51–cysteine 63, and cysteine 57–cysteine 70.

Belongs to the conotoxin O1 superfamily. In terms of tissue distribution, expressed by the venom duct.

The protein localises to the secreted. This is Conotoxin LvVIA from Conus lividus (Livid cone).